Consider the following 438-residue polypeptide: uncharacterized protein (438 aa).

Residues 1-20 (MNTRLALVLCAVGSGVLSFS) form the signal peptide. C21 is lipidated: N-palmitoyl cysteine. Residue C21 is the site of S-diacylglycerol cysteine attachment.

It is found in the cell membrane. This is an uncharacterized protein from Treponema pallidum (strain Nichols).